The chain runs to 62 residues: Large ribosomal subunit protein bL32 (62 aa).

Over residues 1 to 16 (MAVPKRKTSPSRRGMR) the composition is skewed to basic residues. Residues 1-44 (MAVPKRKTSPSRRGMRRSADALKAPTYVEDKDSGELRRPHHIDL) form a disordered region. The span at 28–44 (VEDKDSGELRRPHHIDL) shows a compositional bias: basic and acidic residues.

This sequence belongs to the bacterial ribosomal protein bL32 family.

In Methylorubrum extorquens (strain CM4 / NCIMB 13688) (Methylobacterium extorquens), this protein is Large ribosomal subunit protein bL32.